Here is a 715-residue protein sequence, read N- to C-terminus: Polyphosphate kinase (715 aa).

An ATP-binding site is contributed by Asn60. Residues Arg380 and Arg410 each coordinate Mg(2+). His440 (phosphohistidine intermediate) is an active-site residue. Residues Tyr473, Arg569, and His597 each contribute to the ATP site.

It belongs to the polyphosphate kinase 1 (PPK1) family. Mg(2+) serves as cofactor. An intermediate of this reaction is the autophosphorylated ppk in which a phosphate is covalently linked to a histidine residue through a N-P bond.

It carries out the reaction [phosphate](n) + ATP = [phosphate](n+1) + ADP. In terms of biological role, catalyzes the reversible transfer of the terminal phosphate of ATP to form a long-chain polyphosphate (polyP). This is Polyphosphate kinase from Erythrobacter litoralis (strain HTCC2594).